The chain runs to 149 residues: D-aminoacyl-tRNA deacylase (149 aa).

The Gly-cisPro motif, important for rejection of L-amino acids signature appears at 137–138 (GP).

The protein belongs to the DTD family. Homodimer.

It is found in the cytoplasm. It catalyses the reaction glycyl-tRNA(Ala) + H2O = tRNA(Ala) + glycine + H(+). The enzyme catalyses a D-aminoacyl-tRNA + H2O = a tRNA + a D-alpha-amino acid + H(+). In terms of biological role, an aminoacyl-tRNA editing enzyme that deacylates mischarged D-aminoacyl-tRNAs. Also deacylates mischarged glycyl-tRNA(Ala), protecting cells against glycine mischarging by AlaRS. Acts via tRNA-based rather than protein-based catalysis; rejects L-amino acids rather than detecting D-amino acids in the active site. By recycling D-aminoacyl-tRNA to D-amino acids and free tRNA molecules, this enzyme counteracts the toxicity associated with the formation of D-aminoacyl-tRNA entities in vivo and helps enforce protein L-homochirality. This Clostridium perfringens (strain ATCC 13124 / DSM 756 / JCM 1290 / NCIMB 6125 / NCTC 8237 / Type A) protein is D-aminoacyl-tRNA deacylase.